A 372-amino-acid polypeptide reads, in one-letter code: DNA replication and repair protein RecF (372 aa).

30 to 37 provides a ligand contact to ATP; that stretch reads GENGQGKT.

The protein belongs to the RecF family.

Its subcellular location is the cytoplasm. The RecF protein is involved in DNA metabolism; it is required for DNA replication and normal SOS inducibility. RecF binds preferentially to single-stranded, linear DNA. It also seems to bind ATP. This chain is DNA replication and repair protein RecF, found in Anaeromyxobacter dehalogenans (strain 2CP-C).